Consider the following 763-residue polypeptide: F-box protein SKP2 (763 aa).

In terms of domain architecture, F-box spans 54–100 (KSSLMCLPTKVLLLILRTLDFNTLVTLCQVNSRFYNLITNEFLFQNV). Position 594 is a phosphothreonine (T594).

As to quaternary structure, interacts with SKP1. Component of the probable SCF(SKP2) complex containing CDC53, SKP1, RBX1 and SKP2. May interact with ribosomes.

The protein localises to the cytoplasm. The protein operates within protein modification; protein ubiquitination. In terms of biological role, substrate recognition component of a SCF (SKP1-CUL1-F-box protein) E3 ubiquitin-protein ligase complex which mediates the ubiquitination and subsequent proteasomal degradation of target proteins. Probably recognizes and binds to phosphorylated target proteins. Regulates protein levels of sulfur metabolism enzymes. The SCF(SKP2) complex may regulate some transcription factors or regulators of cysteine and methionine biosynthesis. This is F-box protein SKP2 (SKP2) from Saccharomyces cerevisiae (strain ATCC 204508 / S288c) (Baker's yeast).